A 231-amino-acid polypeptide reads, in one-letter code: Secreted LysM effector LysM13 (231 aa).

Residues Met-1–Ala-19 form the signal peptide. Residues Asn-30, Asn-34, Asn-77, Asn-100, Asn-130, Asn-201, and Asn-226 are each glycosylated (N-linked (GlcNAc...) asparagine). The LysM domain occupies Thr-38–Ile-82.

Belongs to the secreted LysM effector family.

Its subcellular location is the secreted. In terms of biological role, secreted LysM effector that might have a role in sequestration of chitin oligosaccharides (breakdown products of fungal cell walls that are released during invasion and act as triggers of host immunity) to dampen host defense. This chain is Secreted LysM effector LysM13, found in Penicillium expansum (Blue mold rot fungus).